The sequence spans 585 residues: RNA polymerase sigma factor RpoD (585 aa).

Positions 67-93 are disordered; that stretch reads PASTLVPKDDSKPARKKKESSASTSGS. Positions 351-421 are sigma-70 factor domain-2; it reads LVKANLRLVV…TRAISDQART (71 aa). The short motif at 375–378 is the Interaction with polymerase core subunit RpoC element; it reads DLIQ. Positions 430–506 are sigma-70 factor domain-3; it reads EQVNKVIRET…DTEVETPVNA (77 aa). A sigma-70 factor domain-4 region spans residues 519-572; sequence VLHTLPAREQKVIRMRFGLDDGYPQTLEEVGYQFKVTRERIRQIEAKALRRLRH. The segment at residues 545 to 564 is a DNA-binding region (H-T-H motif); the sequence is LEEVGYQFKVTRERIRQIEA.

This sequence belongs to the sigma-70 factor family. RpoD/SigA subfamily. In terms of assembly, interacts transiently with the RNA polymerase catalytic core.

It localises to the cytoplasm. In terms of biological role, sigma factors are initiation factors that promote the attachment of RNA polymerase to specific initiation sites and are then released. This sigma factor is the primary sigma factor during exponential growth. The protein is RNA polymerase sigma factor RpoD of Leptospira interrogans serogroup Icterohaemorrhagiae serovar copenhageni (strain Fiocruz L1-130).